Here is a 328-residue protein sequence, read N- to C-terminus: Hairy/enhancer-of-split related with YRPW motif-like protein (328 aa).

A disordered region spans residues 1 to 57; sequence MKRPKEPSGSDGESDGPIDVGQEGQLSQMARPLSTPSSSQMQARKKHRGIIEKRRRD. Positions 24–42 are enriched in polar residues; it reads GQLSQMARPLSTPSSSQMQ. The segment at 42 to 111 is transcriptional repression and interaction with NCOR1 and SIN3A; it reads QARKKHRGII…GGTGFFDARA (70 aa). Residues 43-98 enclose the bHLH domain; the sequence is ARKKHRGIIEKRRRDRINSSLSELRRLVPTAFEKQGSSKLEKAEVLQMTVDHLKML. An Orange domain is found at 116–153; that stretch reads FRSIGFRECLTEVIRYLGVLEGPSSRADPVRIRLLSHL. Positions 239–308 are disordered; that stretch reads SRGASSTRRA…NSSSPGPAGR (70 aa). Residues 261–270 show a composition bias toward low complexity; it reads APSSRAARSS.

It belongs to the HEY family. Self-associates. Interacts with GATA4, GATA6, HES1, HEY1 and HEY2. Interacts with HDAC1, NCOR1 and SIN3A.

It is found in the nucleus. Its function is as follows. Downstream effector of Notch signaling which may be required for cardiovascular development. Transcriptional repressor which binds preferentially to the canonical E box sequence 5'-CACGTG-3'. Represses transcription by the cardiac transcriptional activators GATA4 and GATA6. This is Hairy/enhancer-of-split related with YRPW motif-like protein (HEYL) from Homo sapiens (Human).